Here is a 143-residue protein sequence, read N- to C-terminus: uncharacterized protein (143 aa).

The active site involves C12.

The protein belongs to the ArsC family.

This is an uncharacterized protein from Rhodospirillum rubrum.